The following is a 209-amino-acid chain: Uracil phosphoribosyltransferase (209 aa).

Residues Arg79, Arg104, and 131 to 139 (DPMLATGGS) each bind 5-phospho-alpha-D-ribose 1-diphosphate. Uracil contacts are provided by residues Ile194 and 199–201 (GDA). Asp200 contacts 5-phospho-alpha-D-ribose 1-diphosphate.

Belongs to the UPRTase family. Requires Mg(2+) as cofactor.

It carries out the reaction UMP + diphosphate = 5-phospho-alpha-D-ribose 1-diphosphate + uracil. It functions in the pathway pyrimidine metabolism; UMP biosynthesis via salvage pathway; UMP from uracil: step 1/1. Allosterically activated by GTP. Its function is as follows. Catalyzes the conversion of uracil and 5-phospho-alpha-D-ribose 1-diphosphate (PRPP) to UMP and diphosphate. This Lactobacillus delbrueckii subsp. bulgaricus (strain ATCC 11842 / DSM 20081 / BCRC 10696 / JCM 1002 / NBRC 13953 / NCIMB 11778 / NCTC 12712 / WDCM 00102 / Lb 14) protein is Uracil phosphoribosyltransferase.